Consider the following 146-residue polypeptide: Leghemoglobin Lb120-8 (146 aa).

In terms of domain architecture, Globin spans 2–146 (GFTEKQEALV…LASAIKKAMN (145 aa)). Nitrated tyrosine is present on residues Tyr-24 and Tyr-29. Ser-44 contributes to the heme b binding site. The residue at position 44 (Ser-44) is a Phosphoserine. Residue His-61 coordinates O2. Residues Lys-64, His-93, and Lys-96 each contribute to the heme b site. A Nitrated tyrosine modification is found at Tyr-134.

It belongs to the plant globin family. Monomer. Nitrated in effective nodules and particularly in hypoxic conditions; this mechanism may play a protective role in the symbiosis by buffering toxic peroxynitrite NO(2)(-). Nitration level decrease during nodule senescence. Post-translationally, phosphorylation at Ser-44 disrupts the molecular environment of its porphyrin ring oxygen binding pocket, thus leading to a reduced oxygen consumption and to the delivery of oxygen O(2) to symbiosomes. As to expression, root nodules.

It localises to the cytoplasm. The protein resides in the cytosol. Its subcellular location is the nucleus. Leghemoglobin that reversibly binds oxygen O(2) through a pentacoordinated heme iron. In root nodules, facilitates the diffusion of oxygen to the bacteroids while preventing the bacterial nitrogenase from being inactivated by buffering dioxygen, nitric oxide and carbon monoxide, and promoting the formation of reactive oxygen species (ROS, e.g. H(2)O(2)). This role is essential for symbiotic nitrogen fixation (SNF). This Pisum sativum (Garden pea) protein is Leghemoglobin Lb120-8.